The following is a 239-amino-acid chain: Phosphoribosylaminoimidazole-succinocarboxamide synthase (239 aa).

It belongs to the SAICAR synthetase family.

It catalyses the reaction 5-amino-1-(5-phospho-D-ribosyl)imidazole-4-carboxylate + L-aspartate + ATP = (2S)-2-[5-amino-1-(5-phospho-beta-D-ribosyl)imidazole-4-carboxamido]succinate + ADP + phosphate + 2 H(+). It functions in the pathway purine metabolism; IMP biosynthesis via de novo pathway; 5-amino-1-(5-phospho-D-ribosyl)imidazole-4-carboxamide from 5-amino-1-(5-phospho-D-ribosyl)imidazole-4-carboxylate: step 1/2. This is Phosphoribosylaminoimidazole-succinocarboxamide synthase from Shouchella clausii (strain KSM-K16) (Alkalihalobacillus clausii).